Reading from the N-terminus, the 296-residue chain is Vacuolar histidine transporter YPQ3 (296 aa).

Topologically, residues 1–12 (MKLIPIILNAKN) are vacuolar. The PQ-loop 1 domain occupies 10–76 (AKNLSGMAGS…QNLLPTMIIL (67 aa)). A helical transmembrane segment spans residues 13 to 33 (LSGMAGSISICCWIVVFVPQI). Residues 34-44 (YENFRRQSAEG) are Cytoplasmic-facing. Residues 45-65 (LSLLFIVLWLLGDIFNVMGAM) form a helical membrane-spanning segment. Over 66–68 (MQN) the chain is Vacuolar. A helical membrane pass occupies residues 69–89 (LLPTMIILAAYYTLADLILLI). At 90–163 (QCMWYDKEKK…RTIVVKEREN (74 aa)) the chain is on the cytoplasmic side. A helical transmembrane segment spans residues 164–184 (FFNDFLIVSGVLIAGILSWYI). The Vacuolar segment spans residues 185–199 (SYCSGLDNGIPKKKP). Residues 200–220 (AFEQINLPAQILGYLSAILYL) form a helical membrane-spanning segment. The PQ-loop 2 domain occupies 208-270 (AQILGYLSAI…ASWLIGSAGT (63 aa)). Over 221–238 (GSRIPQIVLNFKRKSCEG) the chain is Cytoplasmic. The chain crosses the membrane as a helical span at residues 239–259 (VSFLFFLFACLGNTSFIISVL). Residues 260 to 262 (SAS) lie on the Vacuolar side of the membrane. A helical transmembrane segment spans residues 263-283 (WLIGSAGTLLMDFTVFIQFFL). Residues 284–296 (YAKPKYEKILIDN) lie on the Cytoplasmic side of the membrane.

It belongs to the laat-1 family.

It is found in the vacuole membrane. Its subcellular location is the mitochondrion membrane. Its function is as follows. Amino acid transporter that moves histidine into the vacuole. May also contribute to low affinity arginine import into the vacuole. May function as an amino acid/proton antiporter. The protein is Vacuolar histidine transporter YPQ3 of Saccharomyces cerevisiae (strain ATCC 204508 / S288c) (Baker's yeast).